A 505-amino-acid polypeptide reads, in one-letter code: Catalase (505 aa).

The disordered stretch occupies residues 1-25 (MSRQDKKLTGVFGHPVSDRENSMTA). Active-site residues include His-56 and Asn-129. Tyr-339 is a binding site for heme.

The protein belongs to the catalase family. As to quaternary structure, homodimer. The cofactor is heme.

The catalysed reaction is 2 H2O2 = O2 + 2 H2O. Functionally, decomposes hydrogen peroxide into water and oxygen; serves to protect cells from the toxic effects of hydrogen peroxide. This chain is Catalase (katA), found in Staphylococcus aureus (strain MRSA252).